A 31-amino-acid chain; its full sequence is Photosystem II reaction center protein M (31 aa).

Residues 5–25 (ILAFIATALLILVPTAFLLII) form a helical membrane-spanning segment.

This sequence belongs to the PsbM family. As to quaternary structure, PSII is composed of 1 copy each of membrane proteins PsbA, PsbB, PsbC, PsbD, PsbE, PsbF, PsbH, PsbI, PsbJ, PsbK, PsbL, PsbM, PsbT, PsbX, PsbY, PsbZ, Psb30/Ycf12, at least 3 peripheral proteins of the oxygen-evolving complex and a large number of cofactors. It forms dimeric complexes.

The protein resides in the plastid membrane. In terms of biological role, one of the components of the core complex of photosystem II (PSII). PSII is a light-driven water:plastoquinone oxidoreductase that uses light energy to abstract electrons from H(2)O, generating O(2) and a proton gradient subsequently used for ATP formation. It consists of a core antenna complex that captures photons, and an electron transfer chain that converts photonic excitation into a charge separation. This subunit is found at the monomer-monomer interface. This chain is Photosystem II reaction center protein M, found in Cuscuta exaltata (Tall dodder).